The following is a 386-amino-acid chain: Patatin group M-2 (386 aa).

Residues 1–23 (MATTKSFLILFFMILATTSSTCA) form the signal peptide. One can recognise a PNPLA domain in the interval 32 to 229 (LSIDGGGIKG…TVGDPALLSL (198 aa)). The GXGXXG signature appears at 36–41 (GGGIKG). Positions 75–79 (GTSTG) match the GXSXG motif. The active-site Nucleophile is serine 77. The N-linked (GlcNAc...) asparagine glycan is linked to asparagine 115. Aspartate 215 (proton acceptor) is an active-site residue. Residues 215-217 (DGG) carry the DGA/G motif. Residues 321–384 (ENALTGTTTE…DRKKLRANKA (64 aa)) are a coiled coil.

This sequence belongs to the patatin family. In terms of tissue distribution, tuber.

The protein resides in the vacuole. In terms of biological role, probable lipolytic acyl hydrolase (LAH), an activity which is thought to be involved in the response of tubers to pathogens. This chain is Patatin group M-2, found in Solanum tuberosum (Potato).